A 450-amino-acid chain; its full sequence is uncharacterized protein (450 aa).

Positions 1 to 58 (MAKGEIVTVKIEEMDFKGYGVGYCEGKPLKVRGGILGQRVAVRVKKGKKGRAEGEIVE) constitute a TRAM domain. 4 residues coordinate [4Fe-4S] cluster: C71, C77, C80, and C159. 4 residues coordinate S-adenosyl-L-methionine: Q285, Y314, E335, and D380. C407 serves as the catalytic Nucleophile.

Belongs to the class I-like SAM-binding methyltransferase superfamily. RNA M5U methyltransferase family.

This is an uncharacterized protein from Caldanaerobacter subterraneus subsp. tengcongensis (strain DSM 15242 / JCM 11007 / NBRC 100824 / MB4) (Thermoanaerobacter tengcongensis).